We begin with the raw amino-acid sequence, 436 residues long: Glutamyl-tRNA reductase (436 aa).

Substrate is bound by residues 49 to 52 (TCNR), Ser-109, 114 to 116 (EGQ), and Gln-120. The active-site Nucleophile is Cys-50. NADP(+) is bound at residue 198 to 203 (GAGRMS).

Belongs to the glutamyl-tRNA reductase family. In terms of assembly, homodimer.

The catalysed reaction is (S)-4-amino-5-oxopentanoate + tRNA(Glu) + NADP(+) = L-glutamyl-tRNA(Glu) + NADPH + H(+). Its pathway is porphyrin-containing compound metabolism; protoporphyrin-IX biosynthesis; 5-aminolevulinate from L-glutamyl-tRNA(Glu): step 1/2. It functions in the pathway porphyrin-containing compound metabolism; chlorophyll biosynthesis. Functionally, catalyzes the NADPH-dependent reduction of glutamyl-tRNA(Glu) to glutamate 1-semialdehyde (GSA). The sequence is that of Glutamyl-tRNA reductase from Prochlorococcus marinus (strain MIT 9313).